Consider the following 252-residue polypeptide: MKIRRIVSTIAIALSVFTFAHAQSFENVENNAKVFSLHLGATRMIYKPNSSGETLAVINEHNYPILVQANVLSEDQKNIAPFIITPPLFRLDALQSSRLRIVKTEGAFPIDRESLQWICVKAIPPKYEDKWAKEEVSGKKSDKATMNIQVSVSSCIKLFVRPADVKGQPDDVAGKIKWQKVGNKLKGVNPTPFYMDIAELRVGEKEITETHYIAPFSSYEYPMPVNGGGDVRWKVVTDYGGISKTFETGLNI.

An N-terminal signal peptide occupies residues M1–A22.

It belongs to the periplasmic pilus chaperone family.

The protein localises to the periplasm. Involved in the biogenesis of the AAF/I fimbriae. In Escherichia coli, this protein is Chaperone protein AggD (aggD).